The chain runs to 520 residues: GMP synthase [glutamine-hydrolyzing] (520 aa).

The Glutamine amidotransferase type-1 domain occupies 8-202 (RLLIIDFGSQ…FVRLAGFSGD (195 aa)). Residue cysteine 86 is the Nucleophile of the active site. Residues histidine 177 and glutamate 179 contribute to the active site. One can recognise a GMPS ATP-PPase domain in the interval 203 to 395 (WTMGAYREQM…LGLPDSFIGR (193 aa)). Residue 230–236 (SGGVDSS) participates in ATP binding.

As to quaternary structure, homodimer.

The enzyme catalyses XMP + L-glutamine + ATP + H2O = GMP + L-glutamate + AMP + diphosphate + 2 H(+). Its pathway is purine metabolism; GMP biosynthesis; GMP from XMP (L-Gln route): step 1/1. Functionally, catalyzes the synthesis of GMP from XMP. The protein is GMP synthase [glutamine-hydrolyzing] of Ruegeria sp. (strain TM1040) (Silicibacter sp.).